The primary structure comprises 405 residues: S-adenosylmethionine synthase (405 aa).

141–146 (GQGSVD) is a binding site for ATP.

This sequence belongs to the AdoMet synthase 2 family. It depends on Mg(2+) as a cofactor.

It carries out the reaction L-methionine + ATP + H2O = S-adenosyl-L-methionine + phosphate + diphosphate. It participates in amino-acid biosynthesis; S-adenosyl-L-methionine biosynthesis; S-adenosyl-L-methionine from L-methionine: step 1/1. Its function is as follows. Catalyzes the formation of S-adenosylmethionine from methionine and ATP. This chain is S-adenosylmethionine synthase, found in Methanococcus maripaludis (strain C6 / ATCC BAA-1332).